The primary structure comprises 207 residues: Ribosomal RNA large subunit methyltransferase E (207 aa).

S-adenosyl-L-methionine is bound by residues Gly61, Trp63, Asp81, Asp97, and Asp122. Residue Lys162 is the Proton acceptor of the active site.

This sequence belongs to the class I-like SAM-binding methyltransferase superfamily. RNA methyltransferase RlmE family.

It is found in the cytoplasm. It catalyses the reaction uridine(2552) in 23S rRNA + S-adenosyl-L-methionine = 2'-O-methyluridine(2552) in 23S rRNA + S-adenosyl-L-homocysteine + H(+). In terms of biological role, specifically methylates the uridine in position 2552 of 23S rRNA at the 2'-O position of the ribose in the fully assembled 50S ribosomal subunit. The polypeptide is Ribosomal RNA large subunit methyltransferase E (Pseudomonas putida (strain ATCC 700007 / DSM 6899 / JCM 31910 / BCRC 17059 / LMG 24140 / F1)).